Consider the following 542-residue polypeptide: Chaperonin GroEL (542 aa).

Residues threonine 29–proline 32, aspartate 86–threonine 90, glycine 413, and aspartate 494 each bind ATP.

The protein belongs to the chaperonin (HSP60) family. In terms of assembly, forms a cylinder of 14 subunits composed of two heptameric rings stacked back-to-back. Interacts with the co-chaperonin GroES.

It is found in the cytoplasm. It carries out the reaction ATP + H2O + a folded polypeptide = ADP + phosphate + an unfolded polypeptide.. Its function is as follows. Together with its co-chaperonin GroES, plays an essential role in assisting protein folding. The GroEL-GroES system forms a nano-cage that allows encapsulation of the non-native substrate proteins and provides a physical environment optimized to promote and accelerate protein folding. This chain is Chaperonin GroEL, found in Endomicrobium trichonymphae.